Consider the following 299-residue polypeptide: Nicotinate-nucleotide pyrophosphorylase [carboxylating] (299 aa).

The segment at 8-12 (HLLPP) is important for hexamer formation. Residues Arg-102, 138-139 (RK), 160-161 (HR), Lys-171, Glu-201, Asp-222, 248-250 (SGG), and Gly-270 each bind quinolinate. Residue Thr-291 is modified to Phosphothreonine.

It belongs to the NadC/ModD family. As to quaternary structure, hexamer formed by 3 homodimers.

The enzyme catalyses nicotinate beta-D-ribonucleotide + CO2 + diphosphate = quinolinate + 5-phospho-alpha-D-ribose 1-diphosphate + 2 H(+). It functions in the pathway cofactor biosynthesis; NAD(+) biosynthesis; nicotinate D-ribonucleotide from quinolinate: step 1/1. In terms of biological role, involved in the catabolism of quinolinic acid (QA). The sequence is that of Nicotinate-nucleotide pyrophosphorylase [carboxylating] (QPRT) from Bos taurus (Bovine).